A 138-amino-acid chain; its full sequence is Large ribosomal subunit protein uL16 (138 aa).

Belongs to the universal ribosomal protein uL16 family. Part of the 50S ribosomal subunit.

Functionally, binds 23S rRNA and is also seen to make contacts with the A and possibly P site tRNAs. This is Large ribosomal subunit protein uL16 from Chlamydia pneumoniae (Chlamydophila pneumoniae).